A 194-amino-acid chain; its full sequence is dCTP deaminase (194 aa).

DCTP-binding positions include 110–115 (RSSLAR), Asp128, 136–138 (VLE), Tyr171, Lys178, and Gln182. The active-site Proton donor/acceptor is the Glu138.

The protein belongs to the dCTP deaminase family. In terms of assembly, homotrimer.

The enzyme catalyses dCTP + H2O + H(+) = dUTP + NH4(+). Its pathway is pyrimidine metabolism; dUMP biosynthesis; dUMP from dCTP (dUTP route): step 1/2. Its function is as follows. Catalyzes the deamination of dCTP to dUTP. The polypeptide is dCTP deaminase (Psychromonas ingrahamii (strain DSM 17664 / CCUG 51855 / 37)).